A 487-amino-acid polypeptide reads, in one-letter code: Malonate-semialdehyde dehydrogenase 2 (487 aa).

Positions 154, 178, 181, 182, and 231 each coordinate NAD(+). The Nucleophile role is filled by Cys-286. Glu-386 lines the NAD(+) pocket.

It belongs to the aldehyde dehydrogenase family. IolA subfamily. Homotetramer.

The enzyme catalyses 3-oxopropanoate + NAD(+) + CoA + H2O = hydrogencarbonate + acetyl-CoA + NADH + H(+). The catalysed reaction is 2-methyl-3-oxopropanoate + NAD(+) + CoA + H2O = propanoyl-CoA + hydrogencarbonate + NADH + H(+). It participates in polyol metabolism; myo-inositol degradation into acetyl-CoA; acetyl-CoA from myo-inositol: step 7/7. Its function is as follows. Catalyzes the oxidation of malonate semialdehyde (MSA) and methylmalonate semialdehyde (MMSA) into acetyl-CoA and propanoyl-CoA, respectively. Is involved in a myo-inositol catabolic pathway. Bicarbonate, and not CO2, is the end-product of the enzymatic reaction. The polypeptide is Malonate-semialdehyde dehydrogenase 2 (Bacillus thuringiensis subsp. konkukian (strain 97-27)).